The chain runs to 282 residues: Bifunctional protein FolD (282 aa).

Residues 165–167 (GRS) and S190 contribute to the NADP(+) site.

It belongs to the tetrahydrofolate dehydrogenase/cyclohydrolase family. In terms of assembly, homodimer.

It catalyses the reaction (6R)-5,10-methylene-5,6,7,8-tetrahydrofolate + NADP(+) = (6R)-5,10-methenyltetrahydrofolate + NADPH. The catalysed reaction is (6R)-5,10-methenyltetrahydrofolate + H2O = (6R)-10-formyltetrahydrofolate + H(+). It participates in one-carbon metabolism; tetrahydrofolate interconversion. Its function is as follows. Catalyzes the oxidation of 5,10-methylenetetrahydrofolate to 5,10-methenyltetrahydrofolate and then the hydrolysis of 5,10-methenyltetrahydrofolate to 10-formyltetrahydrofolate. This is Bifunctional protein FolD from Macrococcus caseolyticus (strain JCSC5402) (Macrococcoides caseolyticum).